Here is a 292-residue protein sequence, read N- to C-terminus: Aquaporin-3 (292 aa).

Topologically, residues M1–Q24 are cytoplasmic. The helical transmembrane segment at A25–S42 threads the bilayer. Topologically, residues V43–F56 are extracellular. Residues L57 to A74 traverse the membrane as a helical segment. Topologically, residues G75–S78 are cytoplasmic. The discontinuously helical intramembrane region spans G79–F92. An NPA 1 motif is present at residues N83 to A85. The Cytoplasmic portion of the chain corresponds to L93–K100. Residues L101–G121 traverse the membrane as a helical segment. Residues L122–N159 lie on the Extracellular side of the membrane. An N-linked (GlcNAc...) asparagine glycan is attached at N141. A helical transmembrane segment spans residues G160–A177. The Cytoplasmic segment spans residues I178 to G189. The helical transmembrane segment at L190–M206 threads the bilayer. Residues G207–S210 lie on the Extracellular side of the membrane. The segment at residues G211–L224 is an intramembrane region (discontinuously helical). The short motif at N215–A217 is the NPA 2 element. At F225–W242 the chain is on the extracellular side. Residues W243 to M264 traverse the membrane as a helical segment. The Cytoplasmic portion of the chain corresponds to I265 to I292.

Belongs to the MIP/aquaporin (TC 1.A.8) family. As to quaternary structure, homotetramer; each monomer provides an independent glycerol/water pore. Could also exist in other oligomeric states. In terms of tissue distribution, widely expressed in epithelial cells of kidney (collecting ducts) and airways, in keratinocytes, immature dendritic cells and erythrocytes. Isoform 2 is not detectable in erythrocytes at the protein level.

The protein localises to the cell membrane. It localises to the basolateral cell membrane. The enzyme catalyses glycerol(in) = glycerol(out). It catalyses the reaction H2O(in) = H2O(out). The catalysed reaction is H2O2(out) = H2O2(in). It carries out the reaction urea(in) = urea(out). Glycerol transport is regulated by pH, with the porin being permeable to glycerol at pH 7.4 but not at pH 5.5. Water permeability, however, is not influenced by pH. In terms of biological role, aquaglyceroporins form homotetrameric transmembrane channels, with each monomer independently mediating glycerol and water transport across the plasma membrane along their osmotic gradient. Could also be permeable to urea. Also participates in cell permeability to H2O2 and H2O2-mediated signaling. In skin, transports glycerol to the epidermis and stratum corneum, where it maintains hydration, elasticity, and supports lipid biosynthesis for barrier repair. In kidney, contributes to the reabsorption of water, helping the body maintain proper fluid balance. The sequence is that of Aquaporin-3 from Homo sapiens (Human).